The chain runs to 182 residues: Large ribosomal subunit protein uL22 (182 aa).

The tract at residues Ala159–Asn182 is disordered.

It belongs to the universal ribosomal protein uL22 family. In terms of assembly, part of the 50S ribosomal subunit.

In terms of biological role, this protein binds specifically to 23S rRNA; its binding is stimulated by other ribosomal proteins, e.g. L4, L17, and L20. It is important during the early stages of 50S assembly. It makes multiple contacts with different domains of the 23S rRNA in the assembled 50S subunit and ribosome. Its function is as follows. The globular domain of the protein is located near the polypeptide exit tunnel on the outside of the subunit, while an extended beta-hairpin is found that lines the wall of the exit tunnel in the center of the 70S ribosome. In Cytophaga hutchinsonii (strain ATCC 33406 / DSM 1761 / CIP 103989 / NBRC 15051 / NCIMB 9469 / D465), this protein is Large ribosomal subunit protein uL22.